The chain runs to 429 residues: UDP-N-acetylglucosamine 1-carboxyvinyltransferase (429 aa).

Residue 22 to 23 coordinates phosphoenolpyruvate; the sequence is KN. Residue Arg102 coordinates UDP-N-acetyl-alpha-D-glucosamine. Catalysis depends on Cys126, which acts as the Proton donor. Cys126 carries the post-translational modification 2-(S-cysteinyl)pyruvic acid O-phosphothioketal. Residues 131 to 135, Asp316, and Ile338 contribute to the UDP-N-acetyl-alpha-D-glucosamine site; that span reads RPVDL.

Belongs to the EPSP synthase family. MurA subfamily.

It is found in the cytoplasm. The enzyme catalyses phosphoenolpyruvate + UDP-N-acetyl-alpha-D-glucosamine = UDP-N-acetyl-3-O-(1-carboxyvinyl)-alpha-D-glucosamine + phosphate. The protein operates within cell wall biogenesis; peptidoglycan biosynthesis. Functionally, cell wall formation. Adds enolpyruvyl to UDP-N-acetylglucosamine. The chain is UDP-N-acetylglucosamine 1-carboxyvinyltransferase from Nitrobacter hamburgensis (strain DSM 10229 / NCIMB 13809 / X14).